The sequence spans 671 residues: DNA ligase (671 aa).

NAD(+) contacts are provided by residues aspartate 32–aspartate 36, serine 81–leucine 82, and glutamate 113. The active-site N6-AMP-lysine intermediate is lysine 115. Arginine 136, glutamate 173, lysine 290, and lysine 314 together coordinate NAD(+). The Zn(2+) site is built by cysteine 408, cysteine 411, cysteine 426, and cysteine 432. The 79-residue stretch at glutamate 593–serine 671 folds into the BRCT domain.

It belongs to the NAD-dependent DNA ligase family. LigA subfamily. Mg(2+) is required as a cofactor. The cofactor is Mn(2+).

It carries out the reaction NAD(+) + (deoxyribonucleotide)n-3'-hydroxyl + 5'-phospho-(deoxyribonucleotide)m = (deoxyribonucleotide)n+m + AMP + beta-nicotinamide D-nucleotide.. DNA ligase that catalyzes the formation of phosphodiester linkages between 5'-phosphoryl and 3'-hydroxyl groups in double-stranded DNA using NAD as a coenzyme and as the energy source for the reaction. It is essential for DNA replication and repair of damaged DNA. The chain is DNA ligase from Escherichia coli O6:H1 (strain CFT073 / ATCC 700928 / UPEC).